The following is a 41-amino-acid chain: Large ribosomal subunit protein bL36 (41 aa).

Belongs to the bacterial ribosomal protein bL36 family.

The sequence is that of Large ribosomal subunit protein bL36 from Zymomonas mobilis subsp. mobilis (strain ATCC 31821 / ZM4 / CP4).